A 275-amino-acid polypeptide reads, in one-letter code: PE family protein PE8 (275 aa).

Residues 5–93 (KTVPEELTAA…AGTYGVTESL (89 aa)) form the PE domain.

It belongs to the mycobacterial PE family. In terms of assembly, forms a heterodimer with PPE15. The dimer forms a 1:1:1 heterotrimeric complex with EspG5.

The protein resides in the secreted. It is found in the cell wall. Its function is as follows. Promotes the intracellular survival of recombinant Mycobacterium within macrophages by regulating host inflammatory cytokines production and inhibiting cell late apoptosis. This is PE family protein PE8 from Mycobacterium tuberculosis (strain ATCC 25618 / H37Rv).